A 463-amino-acid polypeptide reads, in one-letter code: Argininosuccinate lyase (463 aa).

The protein belongs to the lyase 1 family. Argininosuccinate lyase subfamily.

The protein localises to the cytoplasm. It catalyses the reaction 2-(N(omega)-L-arginino)succinate = fumarate + L-arginine. It functions in the pathway amino-acid biosynthesis; L-arginine biosynthesis; L-arginine from L-ornithine and carbamoyl phosphate: step 3/3. The sequence is that of Argininosuccinate lyase from Dinoroseobacter shibae (strain DSM 16493 / NCIMB 14021 / DFL 12).